The primary structure comprises 70 residues: Large ribosomal subunit protein eL38 (70 aa).

This sequence belongs to the eukaryotic ribosomal protein eL38 family.

The polypeptide is Large ribosomal subunit protein eL38 (RpL38) (Timarcha balearica).